We begin with the raw amino-acid sequence, 158 residues long: Transcription elongation factor GreA (158 aa).

Residues 47–74 adopt a coiled-coil conformation; sequence NSEYDEAKNEQAFTEGRIIQLENMLKNA.

It belongs to the GreA/GreB family.

Necessary for efficient RNA polymerase transcription elongation past template-encoded arresting sites. The arresting sites in DNA have the property of trapping a certain fraction of elongating RNA polymerases that pass through, resulting in locked ternary complexes. Cleavage of the nascent transcript by cleavage factors such as GreA or GreB allows the resumption of elongation from the new 3'terminus. GreA releases sequences of 2 to 3 nucleotides. The protein is Transcription elongation factor GreA of Clostridium perfringens (strain ATCC 13124 / DSM 756 / JCM 1290 / NCIMB 6125 / NCTC 8237 / Type A).